The chain runs to 496 residues: Pituitary adenylate cyclase-activating polypeptide type I receptor (496 aa).

A signal peptide spans 1–20; the sequence is MARTLQLSLTALLLLPMAIA. At 21–152 the chain is on the extracellular side; that stretch reads MHSDCIFKKE…SGDQDYYYLS (132 aa). Cystine bridges form between cysteine 34–cysteine 63, cysteine 54–cysteine 118, and cysteine 77–cysteine 134. 3 N-linked (GlcNAc...) asparagine glycosylation sites follow: asparagine 48, asparagine 60, and asparagine 117. The tract at residues 125-139 is important for ADCYAP1/PACAP ligand binding and specificity; it reads EPFPHYFDACGFDDY. The interval 125 to 139 is important for ligand binding and specificity; sequence EPFPHYFDACGFDDY. A helical membrane pass occupies residues 153–177; sequence VKALYTVGYSTSLVTLTTAMVILCR. At 178–187 the chain is on the cytoplasmic side; it reads FRKLHCTRNF. A helical transmembrane segment spans residues 188 to 208; the sequence is IHMNLFVSFMLRAISVFIKDW. At 209–223 the chain is on the extracellular side; the sequence is ILYAEQDSSHCFVST. Residues 224-249 traverse the membrane as a helical segment; that stretch reads VECKAVMVFFHYCVVSNYFWLFIEGL. Cysteines 226 and 296 form a disulfide. The Cytoplasmic segment spans residues 250–267; the sequence is YLFTLLVETFFPERRYFY. Residues 268-290 form a helical membrane-spanning segment; the sequence is WYTIIGWGTPTVCVTVWAVLRLY. The Extracellular segment spans residues 291 to 302; sequence FDDAGCWDMNDS. Residues 303–329 form a helical membrane-spanning segment; that stretch reads TALWWVIKGPVVGSIMVNFVLFIGIII. At 330–347 the chain is on the cytoplasmic side; that stretch reads ILVQKLQSPDMGGNESSI. Residues 348–402 traverse the membrane as a helical segment; that stretch reads YFSCVQKCYCKPQRAQQHSCKMSELSTITLRLARSTLLLIPLFGIHYTVFAFSPE. Topologically, residues 403-407 are extracellular; sequence NVSKR. A helical membrane pass occupies residues 408-431; it reads ERLVFELGLGSFQGFVVAVLYCFL. Over 432–496 the chain is Cytoplasmic; it reads NGEVQAEIKR…SSLPADNLAT (65 aa). Phosphoserine is present on residues serine 462 and serine 475.

The protein belongs to the G-protein coupled receptor 2 family. Interacts with maxadilan, a vasodilator peptide from Lutzomyia longipalpis saliva; the interaction results in ADCYAP1R1 activation.

It localises to the cell membrane. G protein-coupled receptor activated by the neuropeptide pituitary adenylate cyclase-activating polypeptide (ADCYAP1/PACAP). Binds both PACAP27 and PACAP38 bioactive peptides. Ligand binding causes a conformation change that triggers signaling via guanine nucleotide-binding proteins (G proteins) and modulates the activity of downstream effectors. Activates cAMP-dependent pathway. May regulate the release of adrenocorticotropin, luteinizing hormone, growth hormone, prolactin, epinephrine, and catecholamine. May play a role in spermatogenesis and sperm motility. Causes smooth muscle relaxation and secretion in the gastrointestinal tract. The sequence is that of Pituitary adenylate cyclase-activating polypeptide type I receptor from Mus musculus (Mouse).